Reading from the N-terminus, the 58-residue chain is MATVKVTLVKSLIGRLANHKACVKGLGLRRIGHTVEVQDTPENRGMINKAHYLLRVEG.

The protein belongs to the universal ribosomal protein uL30 family. In terms of assembly, part of the 50S ribosomal subunit.

The sequence is that of Large ribosomal subunit protein uL30 from Azotobacter vinelandii (strain DJ / ATCC BAA-1303).